The sequence spans 197 residues: Xanthine phosphoribosyltransferase (197 aa).

Xanthine contacts are provided by L20 and N27. 128–132 contacts 5-phospho-alpha-D-ribose 1-diphosphate; it reads ANGQA. K156 serves as a coordination point for xanthine.

The protein belongs to the purine/pyrimidine phosphoribosyltransferase family. Xpt subfamily. Homodimer.

It localises to the cytoplasm. It carries out the reaction XMP + diphosphate = xanthine + 5-phospho-alpha-D-ribose 1-diphosphate. It participates in purine metabolism; XMP biosynthesis via salvage pathway; XMP from xanthine: step 1/1. Functionally, converts the preformed base xanthine, a product of nucleic acid breakdown, to xanthosine 5'-monophosphate (XMP), so it can be reused for RNA or DNA synthesis. This chain is Xanthine phosphoribosyltransferase, found in Bacillus cereus (strain ATCC 10987 / NRS 248).